The following is a 313-amino-acid chain: Olfactory receptor 10K1 (313 aa).

Topologically, residues 1–25 (MEQVNKTVVREFVVLGFSSLARLQQ) are extracellular. Asparagine 5 is a glycosylation site (N-linked (GlcNAc...) asparagine). The helical transmembrane segment at 26-46 (LLFVIFLLLYLFTLGTNAIII) threads the bilayer. Over 47 to 54 (STIVLDRA) the chain is Cytoplasmic. Residues 55 to 75 (LHTPMYFFLAILSCSEICYTF) traverse the membrane as a helical segment. Residues 76–99 (VIVPKMLVDLLSQKKTISFLGCAI) lie on the Extracellular side of the membrane. The chain crosses the membrane as a helical span at residues 100–120 (QMFSFLFFGSSHSFLLAAMGY). Residues 121–139 (DRYMAICNPLRYSVLMGHG) are Cytoplasmic-facing. The chain crosses the membrane as a helical span at residues 140 to 160 (VCMGLMAAACACGFTVSLVTT). Residues 161-197 (SLVFHLPFHSSNQLHHFFCDISPVLKLASQHSGFSQL) lie on the Extracellular side of the membrane. The chain crosses the membrane as a helical span at residues 198–217 (VIFMLGVFALVIPLLLILVS). Residues 218–237 (YIRIISAILKIPSSVGRYKT) are Cytoplasmic-facing. Residues 238–258 (FSTCASHLIVVTVHYSCASFI) traverse the membrane as a helical segment. Residues 259-271 (YLRPKTNYTSSQD) are Extracellular-facing. Asparagine 265 carries N-linked (GlcNAc...) asparagine glycosylation. A helical membrane pass occupies residues 272–292 (TLISVSYTILTPLFNPMIYSL). The Cytoplasmic portion of the chain corresponds to 293 to 313 (RNKEFKSALRRTIGQTFYPLS).

This sequence belongs to the G-protein coupled receptor 1 family.

The protein localises to the cell membrane. Odorant receptor. In Homo sapiens (Human), this protein is Olfactory receptor 10K1 (OR10K1).